We begin with the raw amino-acid sequence, 399 residues long: Succinate--CoA ligase [ADP-forming] subunit beta (399 aa).

An ATP-grasp domain is found at 9 to 254 (KALLREFGVP…ESEEDAKEIE (246 aa)). Residues Lys46, 53 to 55 (GRG), Glu109, Ser112, and Glu117 contribute to the ATP site. Residues Asn209 and Asp223 each contribute to the Mg(2+) site. Substrate-binding positions include Asn274 and 331–333 (GIM).

This sequence belongs to the succinate/malate CoA ligase beta subunit family. Heterotetramer of two alpha and two beta subunits. Requires Mg(2+) as cofactor.

It catalyses the reaction succinate + ATP + CoA = succinyl-CoA + ADP + phosphate. The enzyme catalyses GTP + succinate + CoA = succinyl-CoA + GDP + phosphate. Its pathway is carbohydrate metabolism; tricarboxylic acid cycle; succinate from succinyl-CoA (ligase route): step 1/1. In terms of biological role, succinyl-CoA synthetase functions in the citric acid cycle (TCA), coupling the hydrolysis of succinyl-CoA to the synthesis of either ATP or GTP and thus represents the only step of substrate-level phosphorylation in the TCA. The beta subunit provides nucleotide specificity of the enzyme and binds the substrate succinate, while the binding sites for coenzyme A and phosphate are found in the alpha subunit. In Nitrobacter winogradskyi (strain ATCC 25391 / DSM 10237 / CIP 104748 / NCIMB 11846 / Nb-255), this protein is Succinate--CoA ligase [ADP-forming] subunit beta.